Consider the following 138-residue polypeptide: Dual specificity phosphatase ibp1 (138 aa).

In terms of domain architecture, Rhodanese spans 19–133 (SPNEISIIDV…WKRRYGGQQG (115 aa)). Cysteine 70 (phosphocysteine intermediate) is an active-site residue.

It belongs to the MPI phosphatase family.

The protein resides in the cytoplasm. It localises to the nucleus. The catalysed reaction is O-phospho-L-tyrosyl-[protein] + H2O = L-tyrosyl-[protein] + phosphate. May play a role in DNA replication checkpoint via regulation of hsk1 or may act downstream of hsk1 in an S phase regulatory pathway. This Schizosaccharomyces pombe (strain 972 / ATCC 24843) (Fission yeast) protein is Dual specificity phosphatase ibp1 (ibp1).